The primary structure comprises 577 residues: Eukaryotic translation initiation factor 3 subunit D (577 aa).

The interval 103 to 177 (DSTKTRFGRG…KDYDKPQRNR (75 aa)) is disordered. Basic and acidic residues predominate over residues 166-177 (GWKDYDKPQRNR). The segment at 305–319 (TLDMVTVNENAADAP) is RNA gate. The disordered stretch occupies residues 558-577 (GSFEDDGEGDVIEENVEEED). A compositionally biased stretch (acidic residues) spans 560–577 (FEDDGEGDVIEENVEEED).

This sequence belongs to the eIF-3 subunit D family. As to quaternary structure, component of the eukaryotic translation initiation factor 3 (eIF-3) complex.

Its subcellular location is the cytoplasm. Its function is as follows. mRNA cap-binding component of the eukaryotic translation initiation factor 3 (eIF-3) complex, which is involved in protein synthesis of a specialized repertoire of mRNAs and, together with other initiation factors, stimulates binding of mRNA and methionyl-tRNAi to the 40S ribosome. The eIF-3 complex specifically targets and initiates translation of a subset of mRNAs involved in cell proliferation. In the eIF-3 complex, eif3d specifically recognizes and binds the 7-methylguanosine cap of a subset of mRNAs. The chain is Eukaryotic translation initiation factor 3 subunit D from Sclerotinia sclerotiorum (strain ATCC 18683 / 1980 / Ss-1) (White mold).